A 1555-amino-acid chain; its full sequence is UDP-glucose:glycoprotein glucosyltransferase 1 (1555 aa).

The first 42 residues, 1-42 (MGCKGDASGACAAGALPVTGVCYKMGVLVVLTVLWLFSSVKA), serve as a signal peptide directing secretion. 2 N-linked (GlcNAc...) asparagine glycosylation sites follow: asparagine 536 and asparagine 1228. Residues 1244–1555 (KTEEVKQDKD…REGPQKREEL (312 aa)) are glucosyltransferase. Residue serine 1277 is modified to Phosphoserine. The disordered stretch occupies residues 1534–1555 (GALYKEKTKEPSREGPQKREEL). Residues 1552 to 1555 (REEL) carry the Prevents secretion from ER motif.

This sequence belongs to the glycosyltransferase 8 family. In terms of assembly, monomer as well as in a tight complex with SELENOF. Interacts with METTL23. Part of a large chaperone multiprotein complex comprising DNAJB11, HSP90B1, HSPA5, HYOU, PDIA2, PDIA4, PDIA6, PPIB, SDF2L1, UGGT1 and very small amounts of ERP29, but not, or at very low levels, CALR nor CANX. Ca(2+) is required as a cofactor. It depends on Mn(2+) as a cofactor. As to expression, higher levels in pancreas, skeletal muscle, kidney, and brain. Low levels in lung and heart.

The protein resides in the endoplasmic reticulum lumen. The protein localises to the endoplasmic reticulum-Golgi intermediate compartment. It catalyses the reaction N(4)-(alpha-D-Man-(1-&gt;2)-alpha-D-Man-(1-&gt;2)-alpha-D-Man-(1-&gt;3)-[alpha-D-Man-(1-&gt;2)-alpha-D-Man-(1-&gt;3)-[alpha-D-Man-(1-&gt;2)-alpha-D-Man-(1-&gt;6)]-alpha-D-Man-(1-&gt;6)]-beta-D-Man-(1-&gt;4)-beta-D-GlcNAc-(1-&gt;4)-beta-D-GlcNAc)-L-asparaginyl-[protein] (N-glucan mannose isomer 9A1,2,3B1,2,3) + UDP-alpha-D-glucose = N(4)-(alpha-D-Glc-(1-&gt;3)-alpha-D-Man-(1-&gt;2)-alpha-D-Man-(1-&gt;2)-alpha-D-Man-(1-&gt;3)-[alpha-D-Man-(1-&gt;2)-alpha-D-Man-(1-&gt;3)-[alpha-D-Man-(1-&gt;2)-alpha-D-Man-(1-&gt;6)]-alpha-D-Man-(1-&gt;6)]-beta-D-Man-(1-&gt;4)-beta-D-GlcNAc-(1-&gt;4)-beta-D-GlcNAc)-L-asparaginyl-[protein] + UDP + H(+). The protein operates within protein modification; protein glycosylation. Its activity is regulated as follows. Catalytic activity is enhanced by complex formation with SELENOF. In terms of biological role, recognizes glycoproteins with minor folding defects. Reglucosylates single N-glycans near the misfolded part of the protein, thus providing quality control for protein folding in the endoplasmic reticulum. Reglucosylated proteins are recognized by calreticulin for recycling to the endoplasmic reticulum and refolding or degradation. This is UDP-glucose:glycoprotein glucosyltransferase 1 (UGGT1) from Homo sapiens (Human).